The primary structure comprises 189 residues: Putative manganese efflux pump MntP (189 aa).

6 consecutive transmembrane segments (helical) span residues 3-23 (PVSLIFLAFAMSTDAFAAAIG), 41-61 (IIFGVIEAITPLVGWLLGQAA), 65-85 (VADWDHWIAFVLLVLLGLHMI), 106-128 (WILAVTALATSIDALAVGVGLAF), 141-161 (GLATMTMVTLGTMLGRALGAV), and 168-188 (MVGGVVLILVGATILYEHLSA).

The protein belongs to the MntP (TC 9.B.29) family.

It localises to the cell inner membrane. Functionally, probably functions as a manganese efflux pump. The polypeptide is Putative manganese efflux pump MntP (Pseudomonas aeruginosa (strain UCBPP-PA14)).